We begin with the raw amino-acid sequence, 150 residues long: D-aminoacyl-tRNA deacylase (150 aa).

The short motif at 138–139 is the Gly-cisPro motif, important for rejection of L-amino acids element; that stretch reads GP.

It belongs to the DTD family. As to quaternary structure, homodimer.

Its subcellular location is the cytoplasm. It carries out the reaction glycyl-tRNA(Ala) + H2O = tRNA(Ala) + glycine + H(+). It catalyses the reaction a D-aminoacyl-tRNA + H2O = a tRNA + a D-alpha-amino acid + H(+). Functionally, an aminoacyl-tRNA editing enzyme that deacylates mischarged D-aminoacyl-tRNAs. Also deacylates mischarged glycyl-tRNA(Ala), protecting cells against glycine mischarging by AlaRS. Acts via tRNA-based rather than protein-based catalysis; rejects L-amino acids rather than detecting D-amino acids in the active site. By recycling D-aminoacyl-tRNA to D-amino acids and free tRNA molecules, this enzyme counteracts the toxicity associated with the formation of D-aminoacyl-tRNA entities in vivo and helps enforce protein L-homochirality. The chain is D-aminoacyl-tRNA deacylase from Flavobacterium johnsoniae (strain ATCC 17061 / DSM 2064 / JCM 8514 / BCRC 14874 / CCUG 350202 / NBRC 14942 / NCIMB 11054 / UW101) (Cytophaga johnsonae).